A 268-amino-acid chain; its full sequence is Tryptophan synthase alpha chain (268 aa).

Active-site proton acceptor residues include glutamate 49 and aspartate 60.

Belongs to the TrpA family. Tetramer of two alpha and two beta chains.

The catalysed reaction is (1S,2R)-1-C-(indol-3-yl)glycerol 3-phosphate + L-serine = D-glyceraldehyde 3-phosphate + L-tryptophan + H2O. Its pathway is amino-acid biosynthesis; L-tryptophan biosynthesis; L-tryptophan from chorismate: step 5/5. Its function is as follows. The alpha subunit is responsible for the aldol cleavage of indoleglycerol phosphate to indole and glyceraldehyde 3-phosphate. This is Tryptophan synthase alpha chain from Vibrio cholerae serotype O1 (strain ATCC 39541 / Classical Ogawa 395 / O395).